A 508-amino-acid polypeptide reads, in one-letter code: Photosystem II CP47 reaction center protein (508 aa).

6 helical membrane-spanning segments follow: residues 21–36, 101–115, 140–156, 203–218, 237–252, and 457–472; these read SVHI…WAGS, IVFS…IWHW, GIHL…FGAF, IAAG…FHLS, VLSS…AFVV, and SFAL…HGAR.

The protein belongs to the PsbB/PsbC family. PsbB subfamily. PSII is composed of 1 copy each of membrane proteins PsbA, PsbB, PsbC, PsbD, PsbE, PsbF, PsbH, PsbI, PsbJ, PsbK, PsbL, PsbM, PsbT, PsbX, PsbY, PsbZ, Psb30/Ycf12, at least 3 peripheral proteins of the oxygen-evolving complex and a large number of cofactors. It forms dimeric complexes. Binds multiple chlorophylls. PSII binds additional chlorophylls, carotenoids and specific lipids. is required as a cofactor.

The protein localises to the plastid. It localises to the chloroplast thylakoid membrane. In terms of biological role, one of the components of the core complex of photosystem II (PSII). It binds chlorophyll and helps catalyze the primary light-induced photochemical processes of PSII. PSII is a light-driven water:plastoquinone oxidoreductase, using light energy to abstract electrons from H(2)O, generating O(2) and a proton gradient subsequently used for ATP formation. This is Photosystem II CP47 reaction center protein from Illicium oligandrum (Star anise).